We begin with the raw amino-acid sequence, 188 residues long: COMM domain-containing protein 1 (188 aa).

Positions 1 to 122 (MAAELEGSKC…CWDRGLRSLS (122 aa)) are sufficient for interaction with SLC12A2. His100, Met109, and His133 together coordinate Cu cation. Residues 117–185 (GLRSLSWRVD…EVEESISTLM (69 aa)) enclose the COMM domain. A required for binding to PtdIns(4,5)P2 region spans residues 124 to 188 (RVDGKSQSRH…ESISTLMQPA (65 aa)).

It belongs to the COMM domain-containing protein 1 family. As to quaternary structure, component of the commander complex consisting of the CCC subcomplex and the retriever subcomplex. Component of the CCC (COMMD/CCDC22/CCDC93) subcomplex consisting of COMMD1, COMMD2, COMMD3, COMMD4, COMMD5, COMMD6, COMMD7, COMMD8, COMMD9, COMMD10, CCDC22 and CCDC93; within the complex forms a heterodimer with COMMD6. Interacts with VPS35L; the interaction associates the CCC complex with the retriever complex. Identified in a complex with an E3 ubiquitin ligase complex composed of TCEB1/elongin C, CUL2, SOCS1 and RBX1; in the complex interacts directly with SOCS1 and CUL2. Identified in a complex with NF-kappa-B. Interacts directly with SLC12A2. Interacts directly with ATP7B (via the N-terminal region). Interacts with ATP7A. Interacts with FAM107A; this interaction stabilizes COMMD1 in the nucleus. Interacts with CCS, CDKN2A, RELA, REL, RELB, NFKB1/p105, NFKB2/p100, NFKBIB, SCNN1D, SCNN1B, CFTR, CLU, SGK1, AKT1, CUL1, CUL2, CUL3, CUL4A, CUL4B, CUL5, CUL7, HIF1A. Post-translationally, ubiquitinated; undergoes both 'Lys-63'- and 'Lys-48'-linked polyubiquitination. Ubiquitinated by XIAP, leading to its proteasomal degradation.

It is found in the nucleus. It localises to the cytoplasm. The protein resides in the endosome membrane. Its subcellular location is the cytoplasmic vesicle. The protein localises to the early endosome. It is found in the recycling endosome. Its function is as follows. Scaffold protein in the commander complex that is essential for endosomal recycling of transmembrane cargos; the commander complex is composed of the CCC subcomplex and the retriever subcomplex. Can modulate activity of cullin-RING E3 ubiquitin ligase (CRL) complexes by displacing CAND1; in vitro promotes CRL E3 activity and dissociates CAND1 from CUL1 and CUL2. Promotes ubiquitination of NF-kappa-B subunit RELA and its subsequent proteasomal degradation. Down-regulates NF-kappa-B activity. Involved in the regulation of membrane expression and ubiquitination of SLC12A2. Modulates Na(+) transport in epithelial cells by regulation of apical cell surface expression of amiloride-sensitive sodium channel (ENaC) subunits and by promoting their ubiquitination presumably involving NEDD4L. Promotes the localization of SCNN1D to recycling endosomes. Promotes CFTR cell surface expression through regulation of its ubiquitination. Down-regulates SOD1 activity by interfering with its homodimerization. Plays a role in copper ion homeostasis. Involved in copper-dependent ATP7A trafficking between the trans-Golgi network and vesicles in the cell periphery; the function is proposed to depend on its association within the CCC complex and cooperation with the WASH complex on early endosomes. Can bind one copper ion per monomer. May function to facilitate biliary copper excretion within hepatocytes. Binds to phosphatidylinositol 4,5-bisphosphate (PtdIns(4,5)P2). Involved in the regulation of HIF1A-mediated transcription; competes with ARNT/Hif-1-beta for binding to HIF1A resulting in decreased DNA binding and impaired transcriptional activation by HIF-1. Negatively regulates neuroblastoma G1/S phase cell cycle progression and cell proliferation by stimulating ubiquitination of NF-kappa-B subunit RELA and NF-kappa-B degradation in a FAM107A- and actin-dependent manner. The polypeptide is COMM domain-containing protein 1 (COMMD1) (Bos taurus (Bovine)).